The chain runs to 823 residues: Leucine--tRNA ligase (823 aa).

The short motif at 41-51 is the 'HIGH' region element; sequence PYPSGTLHVGH. The 'KMSKS' region signature appears at 580–584; sequence KMSKS. Lys-583 is a binding site for ATP.

The protein belongs to the class-I aminoacyl-tRNA synthetase family.

It is found in the cytoplasm. The catalysed reaction is tRNA(Leu) + L-leucine + ATP = L-leucyl-tRNA(Leu) + AMP + diphosphate. In Thermosipho melanesiensis (strain DSM 12029 / CIP 104789 / BI429), this protein is Leucine--tRNA ligase.